A 387-amino-acid polypeptide reads, in one-letter code: 3-ketoacyl-CoA thiolase (387 aa).

The active-site Acyl-thioester intermediate is the Cys-91. Residues His-343 and Cys-373 each act as proton acceptor in the active site.

This sequence belongs to the thiolase-like superfamily. Thiolase family. Heterotetramer of two alpha chains (FadB) and two beta chains (FadA).

The protein localises to the cytoplasm. It carries out the reaction an acyl-CoA + acetyl-CoA = a 3-oxoacyl-CoA + CoA. It participates in lipid metabolism; fatty acid beta-oxidation. Catalyzes the final step of fatty acid oxidation in which acetyl-CoA is released and the CoA ester of a fatty acid two carbons shorter is formed. The polypeptide is 3-ketoacyl-CoA thiolase (Shewanella denitrificans (strain OS217 / ATCC BAA-1090 / DSM 15013)).